Reading from the N-terminus, the 210-residue chain is Viral protein 1 (210 aa).

This chain is Viral protein 1, found in Chaetoceros (Chaetoceros sp. DNA virus 7).